A 347-amino-acid chain; its full sequence is N-acetyl-gamma-glutamyl-phosphate reductase (347 aa).

The active site involves cysteine 155.

It belongs to the NAGSA dehydrogenase family. Type 1 subfamily.

It localises to the cytoplasm. It carries out the reaction N-acetyl-L-glutamate 5-semialdehyde + phosphate + NADP(+) = N-acetyl-L-glutamyl 5-phosphate + NADPH + H(+). It participates in amino-acid biosynthesis; L-arginine biosynthesis; N(2)-acetyl-L-ornithine from L-glutamate: step 3/4. Catalyzes the NADPH-dependent reduction of N-acetyl-5-glutamyl phosphate to yield N-acetyl-L-glutamate 5-semialdehyde. The chain is N-acetyl-gamma-glutamyl-phosphate reductase from Akkermansia muciniphila (strain ATCC BAA-835 / DSM 22959 / JCM 33894 / BCRC 81048 / CCUG 64013 / CIP 107961 / Muc).